A 179-amino-acid polypeptide reads, in one-letter code: Replication restart protein DnaT (179 aa).

The tract at residues 156–179 (GGLPKRDVNTVSEPDSQIPPGFRG) is disordered.

The protein belongs to the DnaT family. As to quaternary structure, homooligomerizes. Interacts with PriB. Component of the replication restart primosome. Primosome assembly occurs via a 'hand-off' mechanism. PriA binds to replication forks, subsequently PriB then DnaT bind; DnaT then displaces ssDNA to generate the helicase loading substrate.

Involved in the restart of stalled replication forks, which reloads the replicative helicase on sites other than the origin of replication. Can function in multiple replication restart pathways. Displaces ssDNA from a PriB-ssDNA complex. Probably forms a spiral filament on ssDNA. This is Replication restart protein DnaT from Escherichia coli O1:K1 / APEC.